The primary structure comprises 652 residues: Serine/threonine-protein kinase ssp1 (652 aa).

The residue at position 58 (Tyr-58) is a Phosphotyrosine. Phosphoserine is present on Ser-59. Position 63 is a phosphotyrosine (Tyr-63). The 275-residue stretch at Tyr-135–Thr-409 folds into the Protein kinase domain. ATP is bound by residues Leu-141–Val-149 and Lys-164. Asp-267 functions as the Proton acceptor in the catalytic mechanism. Disordered regions lie at residues Asp-467 to Leu-491 and Asn-506 to Lys-529. Positions Ser-508–His-518 are enriched in basic and acidic residues.

This sequence belongs to the protein kinase superfamily. Ser/Thr protein kinase family.

It localises to the cytoplasm. The catalysed reaction is L-seryl-[protein] + ATP = O-phospho-L-seryl-[protein] + ADP + H(+). It catalyses the reaction L-threonyl-[protein] + ATP = O-phospho-L-threonyl-[protein] + ADP + H(+). Functionally, involved in actin localization and thus in polarized cell growth. This chain is Serine/threonine-protein kinase ssp1 (ssp1), found in Schizosaccharomyces pombe (strain 972 / ATCC 24843) (Fission yeast).